The primary structure comprises 443 residues: Pyrrolysine--tRNA ligase (443 aa).

Residues Val103–Pro177 form a disordered region. A compositionally biased stretch (low complexity) spans Pro131–Pro177.

Belongs to the class-II aminoacyl-tRNA synthetase family.

Its subcellular location is the cytoplasm. The enzyme catalyses tRNA(Pyl) + L-pyrrolysine + ATP = L-pyrrolysyl-tRNA(Pyl) + AMP + diphosphate. Its function is as follows. Catalyzes the attachment of pyrrolysine to tRNA(Pyl). Pyrrolysine is a lysine derivative encoded by the termination codon UAG. This chain is Pyrrolysine--tRNA ligase, found in Methanosarcina acetivorans (strain ATCC 35395 / DSM 2834 / JCM 12185 / C2A).